The sequence spans 137 residues: Chaperone protein YscB (137 aa).

Interacts with SycN to form a complex which specifically binds to YopN.

Its subcellular location is the cytoplasm. The protein resides in the cell inner membrane. Functions as a specific chaperone for YopN. It could facilitate the secretion and the subsequent translocation of YopN. This Yersinia enterocolitica protein is Chaperone protein YscB (yscB).